The primary structure comprises 145 residues: Neuropeptide-like protein 68 (145 aa).

The N-terminal stretch at Met-1 to Gly-15 is a signal peptide. The interval Ser-41–Ile-65 is disordered.

The protein resides in the secreted. The chain is Neuropeptide-like protein 68 from Caenorhabditis elegans.